We begin with the raw amino-acid sequence, 675 residues long: DNA ligase (675 aa).

NAD(+) contacts are provided by residues 35 to 39 (DSEYD), 84 to 85 (SL), and glutamate 115. The active-site N6-AMP-lysine intermediate is the lysine 117. NAD(+) contacts are provided by arginine 138, glutamate 175, lysine 292, and lysine 316. Cysteine 410, cysteine 413, cysteine 428, and cysteine 434 together coordinate Zn(2+). Positions 593–675 (QIVQPLLGRT…RNFLDDTSFP (83 aa)) constitute a BRCT domain.

Belongs to the NAD-dependent DNA ligase family. LigA subfamily. Requires Mg(2+) as cofactor. The cofactor is Mn(2+).

It carries out the reaction NAD(+) + (deoxyribonucleotide)n-3'-hydroxyl + 5'-phospho-(deoxyribonucleotide)m = (deoxyribonucleotide)n+m + AMP + beta-nicotinamide D-nucleotide.. Its function is as follows. DNA ligase that catalyzes the formation of phosphodiester linkages between 5'-phosphoryl and 3'-hydroxyl groups in double-stranded DNA using NAD as a coenzyme and as the energy source for the reaction. It is essential for DNA replication and repair of damaged DNA. The polypeptide is DNA ligase (Nitrosococcus oceani (strain ATCC 19707 / BCRC 17464 / JCM 30415 / NCIMB 11848 / C-107)).